A 218-amino-acid chain; its full sequence is Large ribosomal subunit protein bL25 (218 aa).

The disordered stretch occupies residues 185-218 (ARAAEEEAPAAEETTAEPELVRERREPRAEEEEE). Acidic residues predominate over residues 190–200 (EEAPAAEETTA). Over residues 203–212 (ELVRERREPR) the composition is skewed to basic and acidic residues.

This sequence belongs to the bacterial ribosomal protein bL25 family. CTC subfamily. As to quaternary structure, part of the 50S ribosomal subunit; part of the 5S rRNA/L5/L18/L25 subcomplex. Contacts the 5S rRNA. Binds to the 5S rRNA independently of L5 and L18.

Its function is as follows. This is one of the proteins that binds to the 5S RNA in the ribosome where it forms part of the central protuberance. The sequence is that of Large ribosomal subunit protein bL25 from Roseiflexus castenholzii (strain DSM 13941 / HLO8).